We begin with the raw amino-acid sequence, 171 residues long: Protein-export protein SecB (171 aa).

Belongs to the SecB family. Homotetramer, a dimer of dimers. One homotetramer interacts with 1 SecA dimer.

It localises to the cytoplasm. Its function is as follows. One of the proteins required for the normal export of preproteins out of the cell cytoplasm. It is a molecular chaperone that binds to a subset of precursor proteins, maintaining them in a translocation-competent state. It also specifically binds to its receptor SecA. The chain is Protein-export protein SecB from Granulibacter bethesdensis (strain ATCC BAA-1260 / CGDNIH1).